Consider the following 444-residue polypeptide: Protein EMP46 (444 aa).

Positions Met1–Gly46 are cleaved as a signal peptide. At Lys47 to Glu408 the chain is on the lumenal side. The region spanning Asp52–Gly269 is the L-type lectin-like domain. Residue Tyr177 coordinates K(+). A disulfide bridge links Cys196 with Cys230. The chain crosses the membrane as a helical span at residues Ile409–Tyr429. Positions Tyr429–Phe432 are mediates the interactions with COPI and COPII coat complexes. At Tyr430–Leu444 the chain is on the cytoplasmic side. Positions Lys440 to Leu444 match the Di-lysine motif motif.

Belongs to the EMP46/EMP47 family. As to quaternary structure, interacts with EMP47 in the endoplasmic reticulum membrane in order to be transported to the Golgi apparatus. Interacts with the coatomer proteins COP1, SEC21 and SEC23.

The protein resides in the golgi apparatus membrane. It localises to the endoplasmic reticulum membrane. Its function is as follows. Involved in the secretion of glycoproteins and in nucleus architecture and gene silencing. This chain is Protein EMP46 (EMP46), found in Saccharomyces cerevisiae (strain ATCC 204508 / S288c) (Baker's yeast).